The sequence spans 427 residues: V-type proton ATPase subunit C 2 (427 aa).

Residues 298–320 (PLGNPARPAAGQTDRDRESEGEG) form a disordered region.

This sequence belongs to the V-ATPase C subunit family. In terms of assembly, V-ATPase is a heteromultimeric enzyme made up of two complexes: the ATP-hydrolytic V1 complex and the proton translocation V0 complex. The V1 complex consists of three catalytic AB heterodimers that form a heterohexamer, three peripheral stalks each consisting of EG heterodimers, one central rotor including subunits D and F, and the regulatory subunits C and H. The proton translocation complex V0 consists of the proton transport subunit a, a ring of proteolipid subunits c9c'', rotary subunit d, subunits e and f, and the accessory subunits ATP6AP1/Ac45 and ATP6AP2/PRR. Predominantly expressed in the lung and kidney. Isoform 1 is lung-specific while isoform 3 is a kidney-specific isoform. Isoform 1 is localized in the lamellar bodies of type II alveolar cells. Isoform 2 is strongly expressed in the cortical and medulla collecting ducts and is found in the plasma membranes of renal alpha and beta intercalated cells.

Functionally, subunit of the V1 complex of vacuolar(H+)-ATPase (V-ATPase), a multisubunit enzyme composed of a peripheral complex (V1) that hydrolyzes ATP and a membrane integral complex (V0) that translocates protons. V-ATPase is responsible for acidifying and maintaining the pH of intracellular compartments and in some cell types, is targeted to the plasma membrane, where it is responsible for acidifying the extracellular environment. Subunit C is necessary for the assembly of the catalytic sector of the enzyme and is likely to have a specific function in its catalytic activity. In Mus musculus (Mouse), this protein is V-type proton ATPase subunit C 2 (Atp6v1c2).